Consider the following 119-residue polypeptide: Large ribosomal subunit protein bL20c (119 aa).

The protein belongs to the bacterial ribosomal protein bL20 family.

The protein localises to the plastid. It localises to the chloroplast. Binds directly to 23S ribosomal RNA and is necessary for the in vitro assembly process of the 50S ribosomal subunit. It is not involved in the protein synthesizing functions of that subunit. The protein is Large ribosomal subunit protein bL20c of Saccharum hybrid (Sugarcane).